A 403-amino-acid chain; its full sequence is Cell cycle checkpoint control protein RAD9B (403 aa).

The interval 285–347 (PLSQARRSHP…ASAGQDDIFE (63 aa)) is disordered. Phosphoserine is present on residues S354 and S363.

Belongs to the rad9 family. Interacts with HUS1, HUS1B, RAD1, RAD9A and RAD17.

The protein is Cell cycle checkpoint control protein RAD9B (Rad9b) of Mus musculus (Mouse).